The following is a 365-amino-acid chain: tRNA/tmRNA (uracil-C(5))-methyltransferase (365 aa).

Residues Q189, Y217, N222, E238, and D298 each coordinate S-adenosyl-L-methionine. The active-site Nucleophile is the C323. The active-site Proton acceptor is E357.

It belongs to the class I-like SAM-binding methyltransferase superfamily. RNA M5U methyltransferase family. TrmA subfamily.

It carries out the reaction uridine(54) in tRNA + S-adenosyl-L-methionine = 5-methyluridine(54) in tRNA + S-adenosyl-L-homocysteine + H(+). The enzyme catalyses uridine(341) in tmRNA + S-adenosyl-L-methionine = 5-methyluridine(341) in tmRNA + S-adenosyl-L-homocysteine + H(+). In terms of biological role, dual-specificity methyltransferase that catalyzes the formation of 5-methyluridine at position 54 (m5U54) in all tRNAs, and that of position 341 (m5U341) in tmRNA (transfer-mRNA). This is tRNA/tmRNA (uracil-C(5))-methyltransferase from Proteus mirabilis (strain HI4320).